An 88-amino-acid polypeptide reads, in one-letter code: HssA/B-like protein 9 (88 aa).

Positions methionine 1 to methionine 14 are enriched in polar residues. The segment at methionine 1 to glycine 26 is disordered.

It belongs to the hssA/B family.

The protein is HssA/B-like protein 9 (hssl9) of Dictyostelium discoideum (Social amoeba).